The following is a 456-amino-acid chain: Ezy-1 protein (456 aa).

An N-terminal signal peptide occupies residues 1 to 28; that stretch reads MQLSSSLRSARSAAASSGCALASRPVVA. 3 disordered regions span residues 167-189, 273-310, and 414-456; these read SDGG…DGDG, FTGK…GGSG, and QPAG…SPNM. Over residues 281–293 the composition is skewed to acidic residues; that stretch reads AEGDDGEDEEEGE. Over residues 418-428 the composition is skewed to basic and acidic residues; sequence DGHEPEPKRPE.

The sequence is that of Ezy-1 protein (Ezy-1) from Chlamydomonas reinhardtii (Chlamydomonas smithii).